The sequence spans 221 residues: Glutathione peroxidase 6 (221 aa).

The signal sequence occupies residues 1 to 19 (MAQKLWGSCLFSLFMAALA). Cysteine 73 is a catalytic residue.

This sequence belongs to the glutathione peroxidase family.

Its subcellular location is the secreted. The enzyme catalyses 2 glutathione + H2O2 = glutathione disulfide + 2 H2O. The chain is Glutathione peroxidase 6 (Gpx6) from Mus musculus (Mouse).